A 142-amino-acid chain; its full sequence is Hemoglobin subunit alpha (142 aa).

Residues histidine 2–arginine 142 form the Globin domain. Histidine 59 and histidine 88 together coordinate heme b.

Belongs to the globin family. As to quaternary structure, heterotetramer of two alpha chains and two beta chains. Red blood cells.

Involved in oxygen transport from the lung to the various peripheral tissues. This is Hemoglobin subunit alpha (hba-A) from Xenopus tropicalis (Western clawed frog).